The chain runs to 385 residues: MKTELNLHGRSLTLHRFPKRSNETLQAWDAGDEYLINHVEEMALPDHQNIVVINDNFGALACWFSEKHHVTFMSDSFVSHKGAQKNLEDNQCNKVAFLTTMDSIPANTDLVLVQLPKSNRHLVWILSQLRKILPTACPVIAVNKAKEIHTSTLKLFEKYLGETKTSLAWKKHRLVFSQANAEPRIEVDPITAWDVEGEHIQLKNLPNVYSGESLDLGARFMLQHIPQDASINHIIDLGCGNGVLSVKAGQLNPNVRLTCVDESFMALESAKQNLLDNLGEGRDIQCVANNCLDGFKPDSCDLIMCNPPFHQQHAITDHIAWQMFCDAKQILNQNGKLLVIGNRHLGYDAKLKRLFGDKNVKLIASNNKFVILQATKNPAKLSAKQ.

The protein belongs to the methyltransferase superfamily. RlmG family.

The protein resides in the cytoplasm. It catalyses the reaction guanosine(1835) in 23S rRNA + S-adenosyl-L-methionine = N(2)-methylguanosine(1835) in 23S rRNA + S-adenosyl-L-homocysteine + H(+). Specifically methylates the guanine in position 1835 (m2G1835) of 23S rRNA. The sequence is that of Ribosomal RNA large subunit methyltransferase G from Vibrio parahaemolyticus serotype O3:K6 (strain RIMD 2210633).